Consider the following 423-residue polypeptide: Glycine amidinotransferase, mitochondrial (423 aa).

The transit peptide at 1 to 43 (MLRVRCLRGGSRGAEAVHYIGSRLGGSLTGWVQRTFQSTQAAT) directs the protein to the mitochondrion. Phosphoserine is present on residues S46 and S49. Position 170 (D170) interacts with arginine. Catalysis depends on residues D254 and H303. The arginine site is built by D305, R322, S354, and S355. An N6-acetyllysine modification is found at K385. Residue C407 is the Amidino-cysteine intermediate of the active site.

The protein belongs to the amidinotransferase family. As to quaternary structure, homodimer. In terms of tissue distribution, highly expressed in the kidney and pancreas, especially in the proximal tubules of the kidney, and alpha cells of the pancreatic islets (at protein level). Moderately expressed in liver hepatocytes (at protein level). Expressed in the kidney, pancreas, liver, colon, ileum, jejunum, heart and skeletal muscle. In reproductive tissues, expressed in the testis, epididymis, ovary, oviduct and uterus. Expressed throughout the brain in neurons, astrocytes and oligodendrocytes. In 12.5 dpc embryos, it is expressed in the middle part of the somites, hepatic primordium and wall of the dorsal aorta. Expressed in 15.5 dpc embryos in isolated cells throughout the central nervous system, skeletal muscles, gonad primordia, caudal somites, liver and pancreas, but not in the choroid plexus, root ganglia or kidney. Expressed in skeletal muscle, kidney, pancreas, central nervous system, liver and intestine epithelial cells, but not in epidermis, dermis, olfactory epithelium, trachea, lung, stomach or heart in 18.5 dpc embryos.

It localises to the mitochondrion inner membrane. The catalysed reaction is L-arginine + glycine = guanidinoacetate + L-ornithine. It catalyses the reaction 4-aminobutanoate + L-arginine = 4-guanidinobutanoate + L-ornithine. The enzyme catalyses beta-alanine + L-arginine = 3-guanidinopropanoate + L-ornithine. It carries out the reaction taurine + L-arginine = taurocyamine + L-ornithine. The protein operates within amine and polyamine biosynthesis; creatine biosynthesis; creatine from L-arginine and glycine: step 1/2. In terms of biological role, transamidinase that catalyzes the transfer of the amidino group of L-arginine onto the amino moiety of acceptor metabolites such as glycine, beta-alanine, gamma-aminobutyric acid (GABA) and taurine yielding the corresponding guanidine derivatives. Catalyzes the rate-limiting step of creatine biosynthesis, namely the transfer of the amidino group from L-arginine to glycine to generate guanidinoacetate, which is then methylated by GAMT to form creatine. Provides creatine as a source for ATP generation in tissues with high energy demands, in particular skeletal muscle, heart and brain. The chain is Glycine amidinotransferase, mitochondrial (Gatm) from Rattus norvegicus (Rat).